We begin with the raw amino-acid sequence, 437 residues long: Glutamate-1-semialdehyde 2,1-aminomutase (437 aa).

Lysine 277 is modified (N6-(pyridoxal phosphate)lysine).

This sequence belongs to the class-III pyridoxal-phosphate-dependent aminotransferase family. HemL subfamily. As to quaternary structure, homodimer. Pyridoxal 5'-phosphate serves as cofactor.

It is found in the cytoplasm. It carries out the reaction (S)-4-amino-5-oxopentanoate = 5-aminolevulinate. Its pathway is porphyrin-containing compound metabolism; protoporphyrin-IX biosynthesis; 5-aminolevulinate from L-glutamyl-tRNA(Glu): step 2/2. It functions in the pathway porphyrin-containing compound metabolism; chlorophyll biosynthesis. The chain is Glutamate-1-semialdehyde 2,1-aminomutase from Thermosynechococcus vestitus (strain NIES-2133 / IAM M-273 / BP-1).